Reading from the N-terminus, the 114-residue chain is Replication initiation control protein YabA (114 aa).

Residues histidine 79, cysteine 81, cysteine 95, and cysteine 98 each coordinate Zn(2+).

Belongs to the YabA family. Homotetramer. Interacts with both DnaA and DnaN, acting as a bridge between these two proteins. Zn(2+) serves as cofactor.

Its subcellular location is the cytoplasm. It is found in the nucleoid. Its function is as follows. Involved in control of chromosome replication initiation. Inhibits the cooperative binding of DnaA to the oriC region, thus negatively regulating initiation of chromosome replication. Inhibits the ability of DnaA-ATP to form a helix on DNA; does not disassemble preformed DnaA-DNA helices. Decreases the residence time of DnaA on the chromosome at its binding sites (oriC, replication forks and promoter-binding sites). Tethers DnaA to the replication machinery via the DNA polymerase beta sliding clamp subunit (dnaN). Associates with oriC and other DnaA targets on the chromosome in a DnaA-dependent manner. The chain is Replication initiation control protein YabA from Lactobacillus johnsonii (strain CNCM I-12250 / La1 / NCC 533).